The primary structure comprises 560 residues: uncharacterized protein (560 aa).

A run of 5 helical transmembrane segments spans residues 9 to 29, 61 to 81, 136 to 156, 305 to 325, and 442 to 462; these read LVITILLIVLGANWLLSSFLL, ILVPTGFPLTTGLGLSLKYKI, IGIANSIATVEGFTLSLASMM, SLQIWGKLFAVLLHGGSASFI, and VVLELYCPYAIMGPVAHTNFY.

Its subcellular location is the membrane. This is an uncharacterized protein from Saccharomyces cerevisiae (strain ATCC 204508 / S288c) (Baker's yeast).